Consider the following 146-residue polypeptide: Large ribosomal subunit protein bL21 (146 aa).

The disordered stretch occupies residues 115–146; the sequence is KSISLGKSAPKSSAKKETVKKETKPKSEKSTN. A compositionally biased stretch (basic and acidic residues) spans 128-146; sequence AKKETVKKETKPKSEKSTN.

Belongs to the bacterial ribosomal protein bL21 family. In terms of assembly, part of the 50S ribosomal subunit. Contacts protein L20.

This protein binds to 23S rRNA in the presence of protein L20. The polypeptide is Large ribosomal subunit protein bL21 (Prochlorococcus marinus (strain MIT 9312)).